The primary structure comprises 728 residues: Microtubule-associated protein VP5 (728 aa).

The protein belongs to the reoviridae microtubule-associated protein family.

The protein localises to the virion. It localises to the host cytoplasm. The protein resides in the host cytoskeleton. Minor inner capsid component. Displays NTPase and RNA 5'-triphosphatase (RTPase) activities. May function as a cofactor of polymerase. Associates with microtubules and plays a role in the formation, structural organization and morphology of viral inclusions, where the assembly of cores and the replication of viral RNA occur. This is Microtubule-associated protein VP5 (S5) from Aquareovirus C (isolate Golden shiner/USA/GSRV/1977) (AQRV-C).